The primary structure comprises 200 residues: Outer-membrane lipoprotein carrier protein (200 aa).

Residues 1–18 form the signal peptide; it reads MKAVVFAMVMAVSFNVFA.

The protein belongs to the LolA family. Monomer.

It localises to the periplasm. Functionally, participates in the translocation of lipoproteins from the inner membrane to the outer membrane. Only forms a complex with a lipoprotein if the residue after the N-terminal Cys is not an aspartate (The Asp acts as a targeting signal to indicate that the lipoprotein should stay in the inner membrane). The chain is Outer-membrane lipoprotein carrier protein from Idiomarina loihiensis (strain ATCC BAA-735 / DSM 15497 / L2-TR).